The primary structure comprises 352 residues: Protein Wnt-3a (352 aa).

The first 18 residues, 1–18 (MAPLGYFLLLCSLKQALG), serve as a signal peptide directing secretion. Intrachain disulfides connect Cys77–Cys88, Cys128–Cys136, Cys138–Cys155, Cys203–Cys217, Cys205–Cys212, Cys281–Cys312, Cys297–Cys307, Cys311–Cys351, Cys327–Cys342, Cys329–Cys339, and Cys334–Cys335. The N-linked (GlcNAc...) asparagine glycan is linked to Asn87. Ser209 is lipidated: O-palmitoleoyl serine; by PORCN. Asn298 is a glycosylation site (N-linked (GlcNAc...) asparagine).

The protein belongs to the Wnt family. As to quaternary structure, forms a soluble 1:1 complex with AFM; this prevents oligomerization and is required for prolonged biological activity. The complex with AFM may represent the physiological form in body fluids. Homooligomer; disulfide-linked, leading to inactivation. Interacts with PORCN. Interacts with APCDD1 and WLS. Component of the Wnt-Fzd-LRP5-LRP6 signaling complex that contains a WNT protein, a FZD protein and LRP5 or LRP6. Interacts directly in the complex with LRP6. Interacts with glypican GPC3. Interacts with PKD1 (via extracellular domain). Interacts with FZD5. Palmitoleoylation by PORCN is required for efficient binding to frizzled receptors. Palmitoleoylation is required for proper trafficking to cell surface, vacuolar acidification is critical to release palmitoleoylated WNT3A from WLS in secretory vesicles. Depalmitoleoylated by NOTUM, leading to inhibit Wnt signaling pathway, possibly by promoting disulfide bond formation and oligomerization. Post-translationally, proteolytic processing by TIKI1 and TIKI2 promotes oxidation and formation of large disulfide-bond oligomers, leading to inactivation of WNT3A. In terms of processing, disulfide bonds have critical and distinct roles in secretion and activity. Loss of each conserved cysteine in WNT3A results in high molecular weight oxidized Wnt oligomers, which are formed through inter-Wnt disulfide bonding. Moderately expressed in placenta and at low levels in adult lung, spleen, and prostate.

The protein localises to the secreted. The protein resides in the extracellular space. It localises to the extracellular matrix. Its function is as follows. Ligand for members of the frizzled family of seven transmembrane receptors. Functions in the canonical Wnt signaling pathway that results in activation of transcription factors of the TCF/LEF family. Required for normal embryonic mesoderm development and formation of caudal somites. Required for normal morphogenesis of the developing neural tube. Mediates self-renewal of the stem cells at the bottom on intestinal crypts (in vitro). This is Protein Wnt-3a (WNT3A) from Homo sapiens (Human).